Reading from the N-terminus, the 596-residue chain is MTQSDHRHTRPSSYGGTVLTQRVSQATVEDSRPLRGWQRRAMVKYLASQPRDFLAVATPGSGKTTFALRVMTELLNSHAVEQVTVVVPTEHLKVQWTRAAATHGLALDPKFSNTNPRTSPEYHGVTMTYAQVAAHPTLHRVRTEGRRTLVIFDEIHHGGNAKAWGDAIREAFSDATRRLALTGTPFRSDDKPIPFVTYALDADGLMHSQADHTYSYAEGLADGVVRPVVFLVYSGQARWRNSAGEEHAARLGEPLSAEQTARAWRTALDPSGEWMPAVISAADQRLRQLRTHVPDAGGMIIASDQTAARAYANLLAQMTSETPTLVLSDDPGSSARITEFAKNTSQWLIAVRMVSEGVDIPRLSVGIYATSASTPLFFAQAIGRFVRSRHPGETASIFVPSVPNLLQLASELETQRNHVLGKPHRESTDNPLGGNPATMTQTEQDDTEKYFTAIGADAELDQIIFDGSSFGTATPAGSEEEAYYLGIPGLLDADQMRALLHRRQNEQLQKRTAAQQASSTPDRTSGAPASVHGQLRELRRELNSLVSIAHHHTGKPHGWIHNELRRRCGGPPIAAATHDQLKARIDAVRQLNAEPS.

Residues 44–203 form the Helicase ATP-binding domain; the sequence is KYLASQPRDF…PFVTYALDAD (160 aa). The 148-residue stretch at 285–432 folds into the Helicase C-terminal domain; sequence RLRQLRTHVP…PHRESTDNPL (148 aa). Disordered stretches follow at residues 420–444 and 506–533; these read LGKPHRESTDNPLGGNPATMTQTEQ and EQLQKRTAAQQASSTPDRTSGAPASVHG. The span at 510-523 shows a compositional bias: polar residues; that stretch reads KRTAAQQASSTPDR.

To M.tuberculosis Rv2917.

This is an uncharacterized protein from Mycobacterium leprae (strain TN).